We begin with the raw amino-acid sequence, 448 residues long: Chromosomal replication initiator protein DnaA (448 aa).

The interval 1–73 is domain I, interacts with DnaA modulators; it reads MSTHLTETWE…VNALKLLTSK (73 aa). Positions 73-109 are domain II; that stretch reads KKYNIDFIVTTEEKIEENEKNHNNEKSNIVVNDEMST. Positions 110–326 are domain III, AAA+ region; it reads MLNPKYTFDS…GALIRIVAFS (217 aa). ATP is bound by residues G154, G156, K157, and T158. A domain IV, binds dsDNA region spans residues 327 to 448; sequence SLTNKEISVD…NELNKRINQK (122 aa).

Belongs to the DnaA family. As to quaternary structure, oligomerizes as a right-handed, spiral filament on DNA at oriC.

The protein resides in the cytoplasm. Its function is as follows. Plays an essential role in the initiation and regulation of chromosomal replication. ATP-DnaA binds to the origin of replication (oriC) to initiate formation of the DNA replication initiation complex once per cell cycle. Binds the DnaA box (a 9 base pair repeat at the origin) and separates the double-stranded (ds)DNA. Forms a right-handed helical filament on oriC DNA; dsDNA binds to the exterior of the filament while single-stranded (ss)DNA is stabiized in the filament's interior. The ATP-DnaA-oriC complex binds and stabilizes one strand of the AT-rich DNA unwinding element (DUE), permitting loading of DNA polymerase. After initiation quickly degrades to an ADP-DnaA complex that is not apt for DNA replication. Binds acidic phospholipids. In Clostridium botulinum (strain 657 / Type Ba4), this protein is Chromosomal replication initiator protein DnaA.